The chain runs to 180 residues: GTP cyclohydrolase 1 (180 aa).

Residues C71, H74, and C142 each contribute to the Zn(2+) site.

Belongs to the GTP cyclohydrolase I family. As to quaternary structure, toroid-shaped homodecamer, composed of two pentamers of five dimers.

The enzyme catalyses GTP + H2O = 7,8-dihydroneopterin 3'-triphosphate + formate + H(+). Its pathway is cofactor biosynthesis; 7,8-dihydroneopterin triphosphate biosynthesis; 7,8-dihydroneopterin triphosphate from GTP: step 1/1. This is GTP cyclohydrolase 1 (folE) from Helicobacter pylori (strain ATCC 700392 / 26695) (Campylobacter pylori).